Reading from the N-terminus, the 777-residue chain is Ribosome-releasing factor 2, mitochondrial (777 aa).

The tr-type G domain occupies 68-353 (AKIRNIGIMA…AVTMYLPSPE (286 aa)). Residues 77 to 84 (AHIDAGKT), 141 to 145 (DTPGH), and 195 to 198 (NKMD) each bind GTP.

This sequence belongs to the TRAFAC class translation factor GTPase superfamily. Classic translation factor GTPase family. EF-G/EF-2 subfamily.

It localises to the mitochondrion. The catalysed reaction is GTP + H2O = GDP + phosphate + H(+). Mitochondrial GTPase that mediates the disassembly of ribosomes from messenger RNA at the termination of mitochondrial protein biosynthesis. Acts in collaboration with MRRF. GTP hydrolysis follows the ribosome disassembly and probably occurs on the ribosome large subunit. Not involved in the GTP-dependent ribosomal translocation step during translation elongation. This is Ribosome-releasing factor 2, mitochondrial from Pongo abelii (Sumatran orangutan).